The primary structure comprises 256 residues: uncharacterized protein (256 aa).

The region spanning 16-83 is the S4 RNA-binding domain; that stretch reads VRLQKILSRA…DSLVYLALNK (68 aa). D121 acts as the Nucleophile in catalysis.

The protein belongs to the pseudouridine synthase RsuA family.

The catalysed reaction is a uridine in RNA = a pseudouridine in RNA. This is an uncharacterized protein from Mycobacterium leprae (strain TN).